The sequence spans 798 residues: Penicillin-binding protein 1A (798 aa).

The Cytoplasmic portion of the chain corresponds to Met-1–Cys-9. A helical; Signal-anchor for type II membrane protein membrane pass occupies residues Phe-10 to Val-30. At Thr-31–Phe-798 the chain is on the periplasmic side. Positions Leu-50 to Glu-218 are transglycosylase. The active-site Proton donor; for transglycosylase activity is Glu-88. Residues Val-414–Asp-700 form a transpeptidase region. Residue Ser-461 is the Acyl-ester intermediate; for transpeptidase activity of the active site. The segment at Ser-751–Phe-798 is disordered. The segment covering Arg-753–Val-777 has biased composition (basic and acidic residues). A compositionally biased stretch (polar residues) spans Leu-783–Phe-798.

This sequence in the N-terminal section; belongs to the glycosyltransferase 51 family. In the C-terminal section; belongs to the transpeptidase family.

It is found in the cell inner membrane. It catalyses the reaction [GlcNAc-(1-&gt;4)-Mur2Ac(oyl-L-Ala-gamma-D-Glu-L-Lys-D-Ala-D-Ala)](n)-di-trans,octa-cis-undecaprenyl diphosphate + beta-D-GlcNAc-(1-&gt;4)-Mur2Ac(oyl-L-Ala-gamma-D-Glu-L-Lys-D-Ala-D-Ala)-di-trans,octa-cis-undecaprenyl diphosphate = [GlcNAc-(1-&gt;4)-Mur2Ac(oyl-L-Ala-gamma-D-Glu-L-Lys-D-Ala-D-Ala)](n+1)-di-trans,octa-cis-undecaprenyl diphosphate + di-trans,octa-cis-undecaprenyl diphosphate + H(+). The catalysed reaction is Preferential cleavage: (Ac)2-L-Lys-D-Ala-|-D-Ala. Also transpeptidation of peptidyl-alanyl moieties that are N-acyl substituents of D-alanine.. It participates in cell wall biogenesis; peptidoglycan biosynthesis. Cell wall formation. Synthesis of cross-linked peptidoglycan from the lipid intermediates. The enzyme has a penicillin-insensitive transglycosylase N-terminal domain (formation of linear glycan strands) and a penicillin-sensitive transpeptidase C-terminal domain (cross-linking of the peptide subunits). This Neisseria cinerea protein is Penicillin-binding protein 1A (mrcA).